The chain runs to 393 residues: Elongation factor Tu (393 aa).

The tr-type G domain maps to 10–203; sequence KPHVNIGTIG…AVDDYIPEPV (194 aa). The segment at 19–26 is G1; the sequence is GHVDHGKT. 19–26 contacts GTP; that stretch reads GHVDHGKT. Thr26 contacts Mg(2+). A G2 region spans residues 60–64; sequence GITIS. The tract at residues 81–84 is G3; sequence DCPG. GTP is bound by residues 81 to 85 and 136 to 139; these read DCPGH and NKVD. The segment at 136 to 139 is G4; that stretch reads NKVD. The segment at 173-175 is G5; sequence SAL.

Belongs to the TRAFAC class translation factor GTPase superfamily. Classic translation factor GTPase family. EF-Tu/EF-1A subfamily. Monomer.

It localises to the cytoplasm. It carries out the reaction GTP + H2O = GDP + phosphate + H(+). Functionally, GTP hydrolase that promotes the GTP-dependent binding of aminoacyl-tRNA to the A-site of ribosomes during protein biosynthesis. The polypeptide is Elongation factor Tu (Chlorobaculum parvum (strain DSM 263 / NCIMB 8327) (Chlorobium vibrioforme subsp. thiosulfatophilum)).